A 198-amino-acid polypeptide reads, in one-letter code: Elongation factor Ts (198 aa).

The interval 81–84 is involved in Mg(2+) ion dislocation from EF-Tu; the sequence is TDFV.

This sequence belongs to the EF-Ts family.

It is found in the cytoplasm. In terms of biological role, associates with the EF-Tu.GDP complex and induces the exchange of GDP to GTP. It remains bound to the aminoacyl-tRNA.EF-Tu.GTP complex up to the GTP hydrolysis stage on the ribosome. In Pseudothermotoga lettingae (strain ATCC BAA-301 / DSM 14385 / NBRC 107922 / TMO) (Thermotoga lettingae), this protein is Elongation factor Ts.